Reading from the N-terminus, the 730-residue chain is Ribosomal RNA large subunit methyltransferase K/L (730 aa).

The 112-residue stretch at 46 to 157 (TAYRLCVWSR…RGEAILSLDL (112 aa)) folds into the THUMP domain. Positions 395 to 418 (ERREAQPEGTEVRQQAPQASEPAR) are disordered.

It belongs to the methyltransferase superfamily. RlmKL family.

It is found in the cytoplasm. The enzyme catalyses guanosine(2445) in 23S rRNA + S-adenosyl-L-methionine = N(2)-methylguanosine(2445) in 23S rRNA + S-adenosyl-L-homocysteine + H(+). It catalyses the reaction guanosine(2069) in 23S rRNA + S-adenosyl-L-methionine = N(2)-methylguanosine(2069) in 23S rRNA + S-adenosyl-L-homocysteine + H(+). Specifically methylates the guanine in position 2445 (m2G2445) and the guanine in position 2069 (m7G2069) of 23S rRNA. The polypeptide is Ribosomal RNA large subunit methyltransferase K/L (Pseudomonas putida (strain GB-1)).